A 307-amino-acid polypeptide reads, in one-letter code: tRNA dimethylallyltransferase 1 (307 aa).

ATP is bound at residue 10-17; the sequence is GPTASGKT. 12-17 serves as a coordination point for substrate; that stretch reads TASGKT. The segment at 35–38 is interaction with substrate tRNA; sequence DSRQ.

Belongs to the IPP transferase family. Monomer. It depends on Mg(2+) as a cofactor.

It catalyses the reaction adenosine(37) in tRNA + dimethylallyl diphosphate = N(6)-dimethylallyladenosine(37) in tRNA + diphosphate. Its function is as follows. Catalyzes the transfer of a dimethylallyl group onto the adenine at position 37 in tRNAs that read codons beginning with uridine, leading to the formation of N6-(dimethylallyl)adenosine (i(6)A). The polypeptide is tRNA dimethylallyltransferase 1 (Geotalea daltonii (strain DSM 22248 / JCM 15807 / FRC-32) (Geobacter daltonii)).